The following is a 115-amino-acid chain: Large ribosomal subunit protein uL22 (115 aa).

It belongs to the universal ribosomal protein uL22 family. In terms of assembly, part of the 50S ribosomal subunit.

In terms of biological role, this protein binds specifically to 23S rRNA; its binding is stimulated by other ribosomal proteins, e.g. L4, L17, and L20. It is important during the early stages of 50S assembly. It makes multiple contacts with different domains of the 23S rRNA in the assembled 50S subunit and ribosome. Functionally, the globular domain of the protein is located near the polypeptide exit tunnel on the outside of the subunit, while an extended beta-hairpin is found that lines the wall of the exit tunnel in the center of the 70S ribosome. The polypeptide is Large ribosomal subunit protein uL22 (Limosilactobacillus fermentum (strain NBRC 3956 / LMG 18251) (Lactobacillus fermentum)).